A 270-amino-acid polypeptide reads, in one-letter code: UPF0354 protein BCE_4835 (270 aa).

The protein belongs to the UPF0354 family.

The protein is UPF0354 protein BCE_4835 of Bacillus cereus (strain ATCC 10987 / NRS 248).